The chain runs to 192 residues: Transmembrane protein 276 (192 aa).

A signal peptide spans 1-32; the sequence is MVSKPRTEWSTVLSHLVLAGVSLHAAVSSVQS. 4 helical membrane-spanning segments follow: residues 35 to 55, 63 to 83, 92 to 112, and 114 to 134; these read GAAA…APGP, AGAW…FHWV, LLLG…PEGC, and VAGQ…AVFT.

It is found in the membrane. The polypeptide is Transmembrane protein 276 (Mus musculus (Mouse)).